We begin with the raw amino-acid sequence, 152 residues long: Aminoglycoside N(6')-acetyltransferase type 1 (152 aa).

Residues 5–152 enclose the N-acetyltransferase domain; the sequence is PLVRPVETTD…AQVRCFRKPL (148 aa). 4 residues coordinate substrate: tryptophan 26, tyrosine 73, glutamate 86, and aspartate 122. Asparagine 127 lines the acetyl-CoA pocket.

In terms of assembly, homodimer.

The enzyme catalyses kanamycin B + acetyl-CoA = N(6')-acetylkanamycin B + CoA + H(+). Catalyzes the transfer of an acetyl group from acetyl-CoA to the 6'-amino group of aminoglycoside molecules conferring resistance to antibiotics containing the purpurosamine ring including amikacin. The chain is Aminoglycoside N(6')-acetyltransferase type 1 (aacA7) from Klebsiella aerogenes (Enterobacter aerogenes).